Here is a 187-residue protein sequence, read N- to C-terminus: MTTTENAQPRLKTRYREEIKTALNDEFKYANVMQIPGVVKVVVNMGVGDAARDAKLINGAVTDLALITGQKPEIRKARKSIAQFKLREGMPIGARVTLRGDRMWEFLDRLVSIALPRIRDFRGLSPKQFDGKGNYTFGLTEQSMFHEIDVDSIDRPRGMDITVVTSATTDDEGRALLRQLGFPFKEN.

The protein belongs to the universal ribosomal protein uL5 family. In terms of assembly, part of the 50S ribosomal subunit; part of the 5S rRNA/L5/L18/L25 subcomplex. Contacts the 5S rRNA and the P site tRNA. Forms a bridge to the 30S subunit in the 70S ribosome.

Functionally, this is one of the proteins that bind and probably mediate the attachment of the 5S RNA into the large ribosomal subunit, where it forms part of the central protuberance. In the 70S ribosome it contacts protein S13 of the 30S subunit (bridge B1b), connecting the 2 subunits; this bridge is implicated in subunit movement. Contacts the P site tRNA; the 5S rRNA and some of its associated proteins might help stabilize positioning of ribosome-bound tRNAs. This is Large ribosomal subunit protein uL5 from Mycobacteroides abscessus (strain ATCC 19977 / DSM 44196 / CCUG 20993 / CIP 104536 / JCM 13569 / NCTC 13031 / TMC 1543 / L948) (Mycobacterium abscessus).